A 240-amino-acid polypeptide reads, in one-letter code: Sugar fermentation stimulation protein homolog (240 aa).

The protein belongs to the SfsA family.

This is Sugar fermentation stimulation protein homolog from Methanothermobacter thermautotrophicus (strain ATCC 29096 / DSM 1053 / JCM 10044 / NBRC 100330 / Delta H) (Methanobacterium thermoautotrophicum).